We begin with the raw amino-acid sequence, 340 residues long: 4-hydroxy-2-oxovalerate aldolase (340 aa).

The 252-residue stretch at Val4 to Leu255 folds into the Pyruvate carboxyltransferase domain. Arg12–Asp13 is a binding site for substrate. Asp13 is a Mn(2+) binding site. The active-site Proton acceptor is the His16. The substrate site is built by Ser166 and His194. Residues His194 and His196 each coordinate Mn(2+).

Belongs to the 4-hydroxy-2-oxovalerate aldolase family.

The catalysed reaction is (S)-4-hydroxy-2-oxopentanoate = acetaldehyde + pyruvate. This is 4-hydroxy-2-oxovalerate aldolase from Streptomyces griseus subsp. griseus (strain JCM 4626 / CBS 651.72 / NBRC 13350 / KCC S-0626 / ISP 5235).